The primary structure comprises 422 residues: E3 ubiquitin-protein ligase IE2 (422 aa).

Residues Met1–Pro10 are compositionally biased toward polar residues. 2 disordered regions span residues Met1–Ile86 and Ser165–Glu215. The segment covering Ser14–Ile26 has biased composition (basic residues). A compositionally biased stretch (low complexity) spans Pro36–Ser63. A compositionally biased stretch (basic and acidic residues) spans Glu71 to Glu80. The span at Asp179 to Gln196 shows a compositional bias: polar residues. The span at Glu200–Glu215 shows a compositional bias: acidic residues. The RING-type; degenerate zinc finger occupies Cys220–Ala268. The stretch at Ile314–Leu414 forms a coiled coil.

Belongs to the alphabaculovirus IE2 protein family. In terms of assembly, homooligomer. In terms of processing, auto-ubiquitinated.

It is found in the host nucleus. It carries out the reaction S-ubiquitinyl-[E2 ubiquitin-conjugating enzyme]-L-cysteine + [acceptor protein]-L-lysine = [E2 ubiquitin-conjugating enzyme]-L-cysteine + N(6)-ubiquitinyl-[acceptor protein]-L-lysine.. In terms of biological role, RING-finger E3 ubiquitin ligase that plays an important regulatory role during the initial stages of infection. Migrates to specific nuclear foci early in infection supposely to prepare the sites for viral replication by targeting and ubiquitinating host proteins. This Bombyx mori nuclear polyhedrosis virus (BmNPV) protein is E3 ubiquitin-protein ligase IE2 (IE2).